The following is a 202-amino-acid chain: GTP cyclohydrolase 1 (202 aa).

Zn(2+) is bound by residues Cys90, His93, and Cys163.

It belongs to the GTP cyclohydrolase I family. As to quaternary structure, toroid-shaped homodecamer, composed of two pentamers of five dimers.

It catalyses the reaction GTP + H2O = 7,8-dihydroneopterin 3'-triphosphate + formate + H(+). It participates in cofactor biosynthesis; 7,8-dihydroneopterin triphosphate biosynthesis; 7,8-dihydroneopterin triphosphate from GTP: step 1/1. The protein is GTP cyclohydrolase 1 (folE) of Mycobacterium bovis (strain ATCC BAA-935 / AF2122/97).